A 178-amino-acid polypeptide reads, in one-letter code: Large ribosomal subunit protein uL6 (178 aa).

This sequence belongs to the universal ribosomal protein uL6 family. In terms of assembly, part of the 50S ribosomal subunit.

In terms of biological role, this protein binds to the 23S rRNA, and is important in its secondary structure. It is located near the subunit interface in the base of the L7/L12 stalk, and near the tRNA binding site of the peptidyltransferase center. This is Large ribosomal subunit protein uL6 from Halobacterium salinarum (strain ATCC 700922 / JCM 11081 / NRC-1) (Halobacterium halobium).